The sequence spans 358 residues: Alanine racemase (358 aa).

The Proton acceptor; specific for D-alanine role is filled by Lys-35. Lys-35 is subject to N6-(pyridoxal phosphate)lysine. Arg-130 serves as a coordination point for substrate. Tyr-255 (proton acceptor; specific for L-alanine) is an active-site residue. Met-303 contacts substrate.

The protein belongs to the alanine racemase family. Pyridoxal 5'-phosphate serves as cofactor.

It catalyses the reaction L-alanine = D-alanine. The protein operates within amino-acid biosynthesis; D-alanine biosynthesis; D-alanine from L-alanine: step 1/1. Its function is as follows. Catalyzes the interconversion of L-alanine and D-alanine. May also act on other amino acids. The sequence is that of Alanine racemase (alr) from Shewanella putrefaciens (strain CN-32 / ATCC BAA-453).